A 352-amino-acid polypeptide reads, in one-letter code: Protein-glutamate methylesterase/protein-glutamine glutaminase 1 (352 aa).

Positions 5-122 (KVLVVDDSAF…SLDVLSVKEE (118 aa)) constitute a Response regulatory domain. A 4-aspartylphosphate modification is found at Asp-56. The CheB-type methylesterase domain maps to 155–352 (PDQDRKLNKL…EITEEVLSML (198 aa)). Catalysis depends on residues Ser-170, His-197, and Asp-297.

It belongs to the CheB family. Phosphorylated by CheA. Phosphorylation of the N-terminal regulatory domain activates the methylesterase activity.

It is found in the cytoplasm. The enzyme catalyses [protein]-L-glutamate 5-O-methyl ester + H2O = L-glutamyl-[protein] + methanol + H(+). It catalyses the reaction L-glutaminyl-[protein] + H2O = L-glutamyl-[protein] + NH4(+). In terms of biological role, involved in chemotaxis. Part of a chemotaxis signal transduction system that modulates chemotaxis in response to various stimuli. Catalyzes the demethylation of specific methylglutamate residues introduced into the chemoreceptors (methyl-accepting chemotaxis proteins or MCP) by CheR. Also mediates the irreversible deamidation of specific glutamine residues to glutamic acid. The protein is Protein-glutamate methylesterase/protein-glutamine glutaminase 1 of Syntrophomonas wolfei subsp. wolfei (strain DSM 2245B / Goettingen).